Consider the following 178-residue polypeptide: Inner membrane-spanning protein YciB (178 aa).

A run of 5 helical transmembrane segments spans residues 12–32, 50–70, 74–94, 120–140, and 145–165; these read LFFA…VAIV, PMQW…LVLH, FIMW…LISD, LTFA…FVAF, and AVWV…FVLA.

This sequence belongs to the YciB family.

Its subcellular location is the cell inner membrane. Plays a role in cell envelope biogenesis, maintenance of cell envelope integrity and membrane homeostasis. The protein is Inner membrane-spanning protein YciB of Laribacter hongkongensis (strain HLHK9).